We begin with the raw amino-acid sequence, 115 residues long: UPF0738 protein SH1953 (115 aa).

It belongs to the UPF0738 family.

The polypeptide is UPF0738 protein SH1953 (Staphylococcus haemolyticus (strain JCSC1435)).